The chain runs to 418 residues: Glutamyl-tRNA reductase (418 aa).

Substrate is bound by residues 49–52 (TCNR), Ser105, 110–112 (EPQ), and Gln116. Residue Cys50 is the Nucleophile of the active site. 185–190 (GAGEMI) contributes to the NADP(+) binding site.

This sequence belongs to the glutamyl-tRNA reductase family. In terms of assembly, homodimer.

The catalysed reaction is (S)-4-amino-5-oxopentanoate + tRNA(Glu) + NADP(+) = L-glutamyl-tRNA(Glu) + NADPH + H(+). It participates in porphyrin-containing compound metabolism; protoporphyrin-IX biosynthesis; 5-aminolevulinate from L-glutamyl-tRNA(Glu): step 1/2. Catalyzes the NADPH-dependent reduction of glutamyl-tRNA(Glu) to glutamate 1-semialdehyde (GSA). The protein is Glutamyl-tRNA reductase of Aromatoleum aromaticum (strain DSM 19018 / LMG 30748 / EbN1) (Azoarcus sp. (strain EbN1)).